The sequence spans 329 residues: Probable cell division protein WhiA (329 aa).

The segment at residues 275–308 (SLEELGALADPPLTKDAVAGRIRRLLAMADKRAQ) is a DNA-binding region (H-T-H motif).

The protein belongs to the WhiA family.

In terms of biological role, involved in cell division and chromosome segregation. This is Probable cell division protein WhiA from Streptomyces avermitilis (strain ATCC 31267 / DSM 46492 / JCM 5070 / NBRC 14893 / NCIMB 12804 / NRRL 8165 / MA-4680).